The primary structure comprises 503 residues: Lactation elevated protein 1 homolog B (503 aa).

The tract at residues 108–155 is disordered; the sequence is LQNQPTSELQDKVGSRETVNICRPDENVSNEKEDQQEESSKPHPPQGY. Basic and acidic residues predominate over residues 130–148; the sequence is RPDENVSNEKEDQQEESSK. 159-166 serves as a coordination point for ATP; the sequence is GNVGTGKT.

This sequence belongs to the AFG1 ATPase family.

The polypeptide is Lactation elevated protein 1 homolog B (lace1b) (Danio rerio (Zebrafish)).